Consider the following 415-residue polypeptide: Cell division control protein 11 (415 aa).

Ser2 carries the N-acetylserine modification. A Phosphoserine modification is found at Ser2. The short motif at 12-19 (RKRKHLKR) is the Basic motif element. The region spanning 19–298 (RGITFTVMIV…ERYRTEALSG (280 aa)) is the Septin-type G domain. The tract at residues 29–36 (GQSGSGRS) is G1 motif. Residues 29–36 (GQSGSGRS), Gly92, 172–180 (KSDSLTRDE), Gly230, and Arg247 contribute to the GTP site. The interval 89 to 92 (DTPG) is G3 motif. The interval 171–174 (SKSD) is G4 motif. A Phosphoserine modification is found at Ser305. Residues 307–360 (RPNLTKLNGSSSSSTTTRRNTNPFKQSNNINNDVLNPASDMHGQSTGENNETYM) are disordered. Residues 316-328 (SSSSSTTTRRNTN) show a composition bias toward low complexity. Thr327 is subject to Phosphothreonine. Polar residues-rich tracts occupy residues 329-340 (PFKQSNNINNDV) and 348-359 (HGQSTGENNETY). Residues 354-414 (ENNETYMTRE…LEKEAKIKQE (61 aa)) adopt a coiled-coil conformation. Residue Lys412 forms a Glycyl lysine isopeptide (Lys-Gly) (interchain with G-Cter in SUMO) linkage.

The protein belongs to the TRAFAC class TrmE-Era-EngA-EngB-Septin-like GTPase superfamily. Septin GTPase family. In terms of assembly, component of the septin complex which consists of CDC3, CDC10, CDC11, CDC12 and probably SHS1 and rearranges to a cortical collar of highly ordered filaments at the mother-bud-neck. A complex formed by CDC3, CDC10, CDC11 and CDC12 is capable of forming long filaments in vitro and the components seem to be present in a 2:2:2:2 arrangement in vivo. The filaments are proposed to be formed by the end-to-end polymerization of CDC3-CDC12-CDC11 complexes with CDC10 serving as a bridge to bundle the polymers into paired filaments. Component of the GIN4 complex composed of at least BNI5, CDC3, CDC10, CDC11, CDC12, GIN4, NAP1 and SHS1. Self-associates. Interacts with BEM4, KCC4, SPR28 and SYP1. Interacts with BNI5. Sumoylated during mitosis on the mother cell side of the bud neck. Sumoylation probably plays a central role in regulating septin ring disassembly during the cell cycle.

It is found in the membrane. Its subcellular location is the bud neck. Functionally, septins are GTPases involved in cytokinesis that assemble early in the cell cycle as a patch at the incipient bud site and form a ring approximate 15 minutes before bud emergence, which transforms into an hour-glass shaped collar of cortical filaments that spans both sides of the mother-bud neck. This collar persists until just before cytokinesis, when it splits into two rings that occupy opposite sides of the neck. The septins at the bud neck serve as a structural scaffold that recruits different components involved in diverse processes at specific stages during the cell cycle. Many proteins bind asymmetrically to the septin collar. The septin assembly is regulated by protein kinases GIN4 and/or CLA4. May act by recruiting MYO1 and HOF1, a protein involved in septation, to the site of cleavage. Septins are also involved in cell morphogenesis, bud site selection, chitin deposition, cell cycle regulation, cell compartmentalization and spore wall formation. CDCd11 with SHS1 11 are involved in the recruitment of BNI5 and thereby ensure efficient localization at the bud neck of MYO1, the type II myosin of the actomyosin contractile ring. In Saccharomyces cerevisiae (strain ATCC 204508 / S288c) (Baker's yeast), this protein is Cell division control protein 11.